Here is a 286-residue protein sequence, read N- to C-terminus: 4-diphosphocytidyl-2-C-methyl-D-erythritol kinase (286 aa).

Lysine 12 is an active-site residue. Proline 96–alanine 106 contributes to the ATP binding site. The active site involves aspartate 138.

Belongs to the GHMP kinase family. IspE subfamily.

The enzyme catalyses 4-CDP-2-C-methyl-D-erythritol + ATP = 4-CDP-2-C-methyl-D-erythritol 2-phosphate + ADP + H(+). It functions in the pathway isoprenoid biosynthesis; isopentenyl diphosphate biosynthesis via DXP pathway; isopentenyl diphosphate from 1-deoxy-D-xylulose 5-phosphate: step 3/6. In terms of biological role, catalyzes the phosphorylation of the position 2 hydroxy group of 4-diphosphocytidyl-2C-methyl-D-erythritol. The sequence is that of 4-diphosphocytidyl-2-C-methyl-D-erythritol kinase from Nitratidesulfovibrio vulgaris (strain DP4) (Desulfovibrio vulgaris).